The sequence spans 379 residues: MFGMLRALKTHVEVPIVVATRAASTNAEKLEEIRERLAKGPNFQDFVQNPDNSRSEWENYEGKLRREKGEEQRLRLPPWLKTTIPVGKNYAKIKAQMRELKLSTVCEEARCPNIGECWGGGEHGTQTATIMLMGDTCTRGCRFCSVKTARKPPPLDVNEPVNTATAIASWGLDYIVLTSVDRDDLPDGGSKHIAETVREIKARNSNIFVECLVPDFRGNLECVETIANSGLDVYAHNIETVEKLTPYVRDRRAHYRQTLQVLTEAKRFNPNLITKSSIMLGLGETDEEIESTLKDLRTAGVDCVTLGQYMQPTNKHLKVIEYVTPEKFKHWEERGNELGFLYTASGPLVRSSYKAGEFFITSILENRKKRQNATELSKE.

The [4Fe-4S] cluster site is built by C106, C111, C117, C137, C141, C144, and S352. One can recognise a Radical SAM core domain in the interval 122-341; that stretch reads EHGTQTATIM…EERGNELGFL (220 aa).

This sequence belongs to the radical SAM superfamily. Lipoyl synthase family. It depends on [4Fe-4S] cluster as a cofactor.

Its subcellular location is the mitochondrion. The enzyme catalyses [[Fe-S] cluster scaffold protein carrying a second [4Fe-4S](2+) cluster] + N(6)-octanoyl-L-lysyl-[protein] + 2 oxidized [2Fe-2S]-[ferredoxin] + 2 S-adenosyl-L-methionine + 4 H(+) = [[Fe-S] cluster scaffold protein] + N(6)-[(R)-dihydrolipoyl]-L-lysyl-[protein] + 4 Fe(3+) + 2 hydrogen sulfide + 2 5'-deoxyadenosine + 2 L-methionine + 2 reduced [2Fe-2S]-[ferredoxin]. The protein operates within protein modification; protein lipoylation via endogenous pathway; protein N(6)-(lipoyl)lysine from octanoyl-[acyl-carrier-protein]: step 2/2. Its function is as follows. Catalyzes the radical-mediated insertion of two sulfur atoms into the C-6 and C-8 positions of the octanoyl moiety bound to the lipoyl domains of lipoate-dependent enzymes, thereby converting the octanoylated domains into lipoylated derivatives. The sequence is that of Lipoyl synthase 2, mitochondrial from Drosophila yakuba (Fruit fly).